The chain runs to 232 residues: MKVGIIGAMEQEVTLLRDRIENRQTLRLASGEIYTGRLHGVEVALLKSGIGKVSAAMGTTLLLDHCRPDVVINTGSAGGLASTLRVGDIVISDEVRYHDADVTAFGYQPGQMAGCPAAFSADAALIALAERCIIALQLNAVRGLICSGDAFINGAEPLARIRRTFPQVAAVEMEAAAIGHVCHAFQTPFVVVRAISDVADQESHISFDEFLKVAAEQSTLMVEAMLRAMASQ.

The active-site Proton acceptor is E12. Substrate contacts are provided by residues G78, I152, and 173-174 (ME). D197 functions as the Proton donor in the catalytic mechanism.

The protein belongs to the PNP/UDP phosphorylase family. MtnN subfamily. As to quaternary structure, homodimer.

The enzyme catalyses S-adenosyl-L-homocysteine + H2O = S-(5-deoxy-D-ribos-5-yl)-L-homocysteine + adenine. It catalyses the reaction S-methyl-5'-thioadenosine + H2O = 5-(methylsulfanyl)-D-ribose + adenine. The catalysed reaction is 5'-deoxyadenosine + H2O = 5-deoxy-D-ribose + adenine. It functions in the pathway amino-acid biosynthesis; L-methionine biosynthesis via salvage pathway; S-methyl-5-thio-alpha-D-ribose 1-phosphate from S-methyl-5'-thioadenosine (hydrolase route): step 1/2. In terms of biological role, catalyzes the irreversible cleavage of the glycosidic bond in both 5'-methylthioadenosine (MTA) and S-adenosylhomocysteine (SAH/AdoHcy) to adenine and the corresponding thioribose, 5'-methylthioribose and S-ribosylhomocysteine, respectively. Also cleaves 5'-deoxyadenosine, a toxic by-product of radical S-adenosylmethionine (SAM) enzymes, into 5-deoxyribose and adenine. Thus, is required for in vivo function of the radical SAM enzymes biotin synthase and lipoic acid synthase, that are inhibited by 5'-deoxyadenosine accumulation. This Edwardsiella ictaluri (strain 93-146) protein is 5'-methylthioadenosine/S-adenosylhomocysteine nucleosidase.